The following is a 266-amino-acid chain: 4-hydroxy-tetrahydrodipicolinate reductase (266 aa).

10–15 serves as a coordination point for NAD(+); that stretch reads GPRGRM. Lysine 38 is a binding site for NADP(+). NAD(+)-binding positions include 99–101 and 125–128; these read GTT and APNF. The Proton donor/acceptor role is filled by histidine 155. Residue histidine 156 participates in (S)-2,3,4,5-tetrahydrodipicolinate binding. Residue lysine 159 is the Proton donor of the active site. A (S)-2,3,4,5-tetrahydrodipicolinate-binding site is contributed by 165–166; that stretch reads GT.

The protein belongs to the DapB family.

The protein localises to the cytoplasm. It carries out the reaction (S)-2,3,4,5-tetrahydrodipicolinate + NAD(+) + H2O = (2S,4S)-4-hydroxy-2,3,4,5-tetrahydrodipicolinate + NADH + H(+). The enzyme catalyses (S)-2,3,4,5-tetrahydrodipicolinate + NADP(+) + H2O = (2S,4S)-4-hydroxy-2,3,4,5-tetrahydrodipicolinate + NADPH + H(+). It participates in amino-acid biosynthesis; L-lysine biosynthesis via DAP pathway; (S)-tetrahydrodipicolinate from L-aspartate: step 4/4. Its function is as follows. Catalyzes the conversion of 4-hydroxy-tetrahydrodipicolinate (HTPA) to tetrahydrodipicolinate. The sequence is that of 4-hydroxy-tetrahydrodipicolinate reductase from Bacillus thuringiensis subsp. konkukian (strain 97-27).